The sequence spans 234 residues: Leucyl/phenylalanyl-tRNA--protein transferase (234 aa).

It belongs to the L/F-transferase family.

It is found in the cytoplasm. The catalysed reaction is N-terminal L-lysyl-[protein] + L-leucyl-tRNA(Leu) = N-terminal L-leucyl-L-lysyl-[protein] + tRNA(Leu) + H(+). The enzyme catalyses N-terminal L-arginyl-[protein] + L-leucyl-tRNA(Leu) = N-terminal L-leucyl-L-arginyl-[protein] + tRNA(Leu) + H(+). It catalyses the reaction L-phenylalanyl-tRNA(Phe) + an N-terminal L-alpha-aminoacyl-[protein] = an N-terminal L-phenylalanyl-L-alpha-aminoacyl-[protein] + tRNA(Phe). Its function is as follows. Functions in the N-end rule pathway of protein degradation where it conjugates Leu, Phe and, less efficiently, Met from aminoacyl-tRNAs to the N-termini of proteins containing an N-terminal arginine or lysine. The polypeptide is Leucyl/phenylalanyl-tRNA--protein transferase (Salmonella arizonae (strain ATCC BAA-731 / CDC346-86 / RSK2980)).